We begin with the raw amino-acid sequence, 95 residues long: MSLDHATVRRIAKLARIRLDEEEVPRLAGELNAILGYVEQLAEVDVEGVAPLSGGAQMALRMREDEVTDGRYPDRVLANAPERIGDFFAVPKVVE.

It belongs to the GatC family. As to quaternary structure, heterotrimer of A, B and C subunits.

The catalysed reaction is L-glutamyl-tRNA(Gln) + L-glutamine + ATP + H2O = L-glutaminyl-tRNA(Gln) + L-glutamate + ADP + phosphate + H(+). It carries out the reaction L-aspartyl-tRNA(Asn) + L-glutamine + ATP + H2O = L-asparaginyl-tRNA(Asn) + L-glutamate + ADP + phosphate + 2 H(+). In terms of biological role, allows the formation of correctly charged Asn-tRNA(Asn) or Gln-tRNA(Gln) through the transamidation of misacylated Asp-tRNA(Asn) or Glu-tRNA(Gln) in organisms which lack either or both of asparaginyl-tRNA or glutaminyl-tRNA synthetases. The reaction takes place in the presence of glutamine and ATP through an activated phospho-Asp-tRNA(Asn) or phospho-Glu-tRNA(Gln). This Acidiphilium cryptum (strain JF-5) protein is Aspartyl/glutamyl-tRNA(Asn/Gln) amidotransferase subunit C.